Consider the following 68-residue polypeptide: MSLEQRVTELESRLAFQDDTIQALNDVLVEQQRVVERLQLQMAAVLKRQEEMVGQFGSFEEDAPPPHY.

The protein belongs to the SlyX family.

This is Protein SlyX homolog from Pseudomonas fluorescens (strain Pf0-1).